We begin with the raw amino-acid sequence, 640 residues long: Calpain-5 (640 aa).

In terms of domain architecture, Calpain catalytic spans 26-343; the sequence is LFEDPLFPAT…FTDIIKCRLI (318 aa). Residues cysteine 81, histidine 252, and asparagine 284 contribute to the active site. The interval 344–496 is domain III; it reads NTSYLSIHKT…VFTDVPSNCR (153 aa). Residues 499–617 enclose the C2 domain; it reads RLDEPPRTCW…HTLHLQDRSS (119 aa).

It belongs to the peptidase C2 family.

Functionally, calcium-regulated non-lysosomal thiol-protease. This Mus musculus (Mouse) protein is Calpain-5 (Capn5).